We begin with the raw amino-acid sequence, 604 residues long: Aspartate--tRNA(Asp/Asn) ligase (604 aa).

Glutamate 168 contacts L-aspartate. The tract at residues 192–195 (QLFK) is aspartate. Arginine 214 contacts L-aspartate. ATP-binding positions include 214-216 (RDE) and glutamine 223. An L-aspartate-binding site is contributed by histidine 446. Position 480 (glutamate 480) interacts with ATP. Arginine 487 contacts L-aspartate. 532–535 (GWDR) is an ATP binding site. Residues 575–604 (LEAGVDARPKPEARAQAGTAGPAAPVADPT) form a disordered region. The segment covering 577–587 (AGVDARPKPEA) has biased composition (basic and acidic residues). The segment covering 588-604 (RAQAGTAGPAAPVADPT) has biased composition (low complexity).

The protein belongs to the class-II aminoacyl-tRNA synthetase family. Type 1 subfamily. In terms of assembly, homodimer.

It is found in the cytoplasm. The catalysed reaction is tRNA(Asx) + L-aspartate + ATP = L-aspartyl-tRNA(Asx) + AMP + diphosphate. In terms of biological role, aspartyl-tRNA synthetase with relaxed tRNA specificity since it is able to aspartylate not only its cognate tRNA(Asp) but also tRNA(Asn). Reaction proceeds in two steps: L-aspartate is first activated by ATP to form Asp-AMP and then transferred to the acceptor end of tRNA(Asp/Asn). The polypeptide is Aspartate--tRNA(Asp/Asn) ligase (Salinispora arenicola (strain CNS-205)).